A 503-amino-acid polypeptide reads, in one-letter code: Probable cytosol aminopeptidase (503 aa).

Positions 274 and 279 each coordinate Mn(2+). The active site involves lysine 286. Residues aspartate 297, aspartate 356, and glutamate 358 each coordinate Mn(2+). Arginine 360 is an active-site residue.

This sequence belongs to the peptidase M17 family. The cofactor is Mn(2+).

Its subcellular location is the cytoplasm. The enzyme catalyses Release of an N-terminal amino acid, Xaa-|-Yaa-, in which Xaa is preferably Leu, but may be other amino acids including Pro although not Arg or Lys, and Yaa may be Pro. Amino acid amides and methyl esters are also readily hydrolyzed, but rates on arylamides are exceedingly low.. It carries out the reaction Release of an N-terminal amino acid, preferentially leucine, but not glutamic or aspartic acids.. In terms of biological role, presumably involved in the processing and regular turnover of intracellular proteins. Catalyzes the removal of unsubstituted N-terminal amino acids from various peptides. This is Probable cytosol aminopeptidase from Burkholderia lata (strain ATCC 17760 / DSM 23089 / LMG 22485 / NCIMB 9086 / R18194 / 383).